Here is a 72-residue protein sequence, read N- to C-terminus: U10-myrmicitoxin-Tb1a (72 aa).

Residues 1-26 (MRVSYLSLTLTIVVVIAIIYAPETEA) form the signal peptide. Positions 27–36 (KAWADADAEA) are excised as a propeptide.

This sequence belongs to the formicidae venom precursor-01 superfamily. As to expression, expressed by the venom gland.

It is found in the secreted. Its function is as follows. In vivo, this neurotoxin paralyzes about 40% of blowflies (L.caesar) one hour after intrathoracic injection, when tested at high doses (28 nmol/g). The chain is U10-myrmicitoxin-Tb1a from Tetramorium bicarinatum (Tramp ant).